Reading from the N-terminus, the 191-residue chain is MAAVELILLQRVEKLGQMGDLVRVKPGYARNFLLPGGRAIRATKANTERFEQQRAQLEAQNLKRREEAERIAERVSGLSVVIIRQAGESGGLYGSVSSRDIAVAITESGLSVNRQQIQLDQPIKMLGLTDVRVVLHPEVVLPVTVNVARSVEEAERQARGEAVGLAAEEAAAAAEAALIEVADEEEVEISA.

It belongs to the bacterial ribosomal protein bL9 family.

Binds to the 23S rRNA. This is Large ribosomal subunit protein bL9 from Granulibacter bethesdensis (strain ATCC BAA-1260 / CGDNIH1).